We begin with the raw amino-acid sequence, 646 residues long: Heat shock 70 kDa protein (646 aa).

Gly residues predominate over residues 613–632; that stretch reads GGAPGGMPGAAPGGFPGGAP. Residues 613 to 646 form a disordered region; the sequence is GGAPGGMPGAAPGGFPGGAPGSNDNEGPTVEEVD.

This sequence belongs to the heat shock protein 70 family.

The polypeptide is Heat shock 70 kDa protein (hsps-1) (Neurospora crassa (strain ATCC 24698 / 74-OR23-1A / CBS 708.71 / DSM 1257 / FGSC 987)).